The sequence spans 273 residues: MKIIILLGLIGASSSAPLISQRLLSASNSHELLLNLNNGQLLPLQFQGAFNSWIPPFPGFLQQQQAQVSGRPQFTLSTLESFAGLFPNQIPLSRQVGLAQGGQAGQPDLSQQQTPPQTQQSASPMSYVVPVKVPQDQTQMFQYYPVYMLLPWEQPQTVTSSPQHTGQQLFEEQIPFYNQFGFAPPQAEPGVPGGQQHLAFDSFVGTAPETPGMPVEGSLLYPQKEPISFKHDNAGVFMPTTSPKPSTDNFFTSGIDPTIAPEQKVKTDSLREP.

A signal peptide spans 1-15 (MKIIILLGLIGASSS). Residues 100–124 (QGGQAGQPDLSQQQTPPQTQQSASP) are disordered. Over residues 110 to 121 (SQQQTPPQTQQS) the composition is skewed to low complexity. O-linked (GalNAc...) threonine glycosylation is found at T114 and T118. Residues 125-127 (MSY) form an interaction with ARHGEF5 region. T159, T240, T241, T247, T252, T258, and T267 each carry an O-linked (GalNAc...) threonine glycan. The span at 240-252 (TTSPKPSTDNFFT) shows a compositional bias: polar residues. A disordered region spans residues 240–273 (TTSPKPSTDNFFTSGIDPTIAPEQKVKTDSLREP). The span at 263-273 (QKVKTDSLREP) shows a compositional bias: basic and acidic residues.

Belongs to the ODAM family. As to quaternary structure, interacts (via C-terminus) with ARHGEF5. O-glycosylated. In terms of tissue distribution, highly expressed in tooth-associated epithelia. Predominantly expressed in mandible.

The protein localises to the secreted. It localises to the cytoplasm. It is found in the nucleus. Its function is as follows. Tooth-associated epithelia protein that probably plays a role in odontogenesis, the complex process that results in the initiation and generation of the tooth. May be incorporated in the enamel matrix at the end of mineralization process. Involved in the induction of RHOA activity via interaction with ARHGEF and expression of downstream factors such as ROCK. Plays a role in attachment of the junctional epithelium to the tooth surface. The protein is Odontogenic ameloblast-associated protein (Odam) of Mus musculus (Mouse).